Reading from the N-terminus, the 94-residue chain is Integration host factor subunit beta (94 aa).

This sequence belongs to the bacterial histone-like protein family. Heterodimer of an alpha and a beta chain.

Its function is as follows. This protein is one of the two subunits of integration host factor, a specific DNA-binding protein that functions in genetic recombination as well as in transcriptional and translational control. In Citrobacter koseri (strain ATCC BAA-895 / CDC 4225-83 / SGSC4696), this protein is Integration host factor subunit beta.